Consider the following 141-residue polypeptide: Oleosin L (141 aa).

A run of 3 helical transmembrane segments spans residues 23–43, 46–66, and 74–94; these read VLFF…LALA, VVLM…ILPV, and AAAF…LIWV. A Proline-knot motif is present at residues 54–65; sequence PVFLLLSPVILP.

This sequence belongs to the oleosin family. In terms of tissue distribution, expressed in megagametophytes (at protein level).

It is found in the lipid droplet. It localises to the membrane. The sequence is that of Oleosin L from Pinus massoniana (Chinese red pine).